A 460-amino-acid polypeptide reads, in one-letter code: Cysteine--tRNA ligase (460 aa).

C28 serves as a coordination point for Zn(2+). Residues 30 to 40 (MTVYDYCHLGH) carry the 'HIGH' region motif. The Zn(2+) site is built by C209, H234, and E238. A 'KMSKS' region motif is present at residues 266–270 (KMSKS). K269 lines the ATP pocket.

The protein belongs to the class-I aminoacyl-tRNA synthetase family. Monomer. Zn(2+) is required as a cofactor.

Its subcellular location is the cytoplasm. The catalysed reaction is tRNA(Cys) + L-cysteine + ATP = L-cysteinyl-tRNA(Cys) + AMP + diphosphate. The sequence is that of Cysteine--tRNA ligase from Pseudomonas savastanoi pv. phaseolicola (strain 1448A / Race 6) (Pseudomonas syringae pv. phaseolicola (strain 1448A / Race 6)).